Consider the following 537-residue polypeptide: CTP synthase (537 aa).

The interval 1-267 (MTKYIFVTGG…DQIVCDHLKL (267 aa)) is amidoligase domain. Ser-13 is a binding site for CTP. Ser-13 is a UTP binding site. 14-19 (SIGKGI) contributes to the ATP binding site. Tyr-54 lines the L-glutamine pocket. Asp-71 lines the ATP pocket. Mg(2+)-binding residues include Asp-71 and Glu-141. Residues 148-150 (DIE), 188-193 (KTKPTQ), and Lys-224 contribute to the CTP site. UTP-binding positions include 188–193 (KTKPTQ) and Lys-224. 240–242 (RDV) is an ATP binding site. The Glutamine amidotransferase type-1 domain occupies 292–535 (RIALVGKYVE…VTAAVKNKNQ (244 aa)). Residue Gly-354 coordinates L-glutamine. The Nucleophile; for glutamine hydrolysis role is filled by Cys-381. Residues 382 to 385 (LGMQ), Glu-405, and Arg-463 each bind L-glutamine. Catalysis depends on residues His-508 and Glu-510.

This sequence belongs to the CTP synthase family. In terms of assembly, homotetramer.

The catalysed reaction is UTP + L-glutamine + ATP + H2O = CTP + L-glutamate + ADP + phosphate + 2 H(+). The enzyme catalyses L-glutamine + H2O = L-glutamate + NH4(+). It carries out the reaction UTP + NH4(+) + ATP = CTP + ADP + phosphate + 2 H(+). It participates in pyrimidine metabolism; CTP biosynthesis via de novo pathway; CTP from UDP: step 2/2. Its activity is regulated as follows. Allosterically activated by GTP, when glutamine is the substrate; GTP has no effect on the reaction when ammonia is the substrate. The allosteric effector GTP functions by stabilizing the protein conformation that binds the tetrahedral intermediate(s) formed during glutamine hydrolysis. Inhibited by the product CTP, via allosteric rather than competitive inhibition. In terms of biological role, catalyzes the ATP-dependent amination of UTP to CTP with either L-glutamine or ammonia as the source of nitrogen. Regulates intracellular CTP levels through interactions with the four ribonucleotide triphosphates. In Streptococcus equi subsp. equi (strain 4047), this protein is CTP synthase.